The following is a 593-amino-acid chain: MAASRSELLRPAFGEPSPSLGPFVVNPHTCSYRWWQKFLIVLVLYTAWASPFELAMEKSASAALAVTELVVDAFFAVDIAVSFFVAYRDASTGLLVTDRKKIATRHLARPCLALDVASTIPLQMIYRIVSGKRQALYGLLNLLRLWRLRRVSKLFARLEKDIRFSYLWTRLIKLLYVTLFAVHFASCIYLWMAFHHKAKELTWIGSQFHGFEDRSVWFCYTCAVYWSITTLATVGYGDLHAANTGEMLFSIAFMLFNMGLTSYIIGNITNLVVHETTNTFKMRDMVQRTSVFGRTNRLPVAMREQMMESLQLRFRAEEQLQQEMLSELPKAVRSGIAQHMFRGAVQSCYLFQGVSDKLVLPLVAEMKAESFPPKADIILENEASTDCYIIVSGEVEVLTTLEDGTEKQVMRIGPRGMAGEIGVMFNIPQPFTIRSRKLTQLVRISHSHMVSTIRPNTADGVVVFSNFVLYLESLKVKAKETAFVRDHLRNGYSTVLGSATMFDVDESKESAHKMLPCKEPKRVSIHEHLLNGTGTALNGSSGKLVILPDSMQDLMKLSEKKFGKAARGILTVGGAEVEDIEVIRDGDHLFFSW.

The Cytoplasmic portion of the chain corresponds to 1 to 33; that stretch reads MAASRSELLRPAFGEPSPSLGPFVVNPHTCSYR. The helical transmembrane segment at 34-54 threads the bilayer; that stretch reads WWQKFLIVLVLYTAWASPFEL. Topologically, residues 55–64 are extracellular; that stretch reads AMEKSASAAL. A helical membrane pass occupies residues 65-85; it reads AVTELVVDAFFAVDIAVSFFV. Over 86 to 106 the chain is Cytoplasmic; it reads AYRDASTGLLVTDRKKIATRH. Residues 107–129 traverse the membrane as a helical segment; that stretch reads LARPCLALDVASTIPLQMIYRIV. The Extracellular segment spans residues 130 to 138; it reads SGKRQALYG. Residues 139-159 form a helical; Voltage-sensor membrane-spanning segment; the sequence is LLNLLRLWRLRRVSKLFARLE. Over 160–173 the chain is Cytoplasmic; it reads KDIRFSYLWTRLIK. The chain crosses the membrane as a helical span at residues 174–194; that stretch reads LLYVTLFAVHFASCIYLWMAF. At 195 to 221 the chain is on the extracellular side; the sequence is HHKAKELTWIGSQFHGFEDRSVWFCYT. Residues 222–241 constitute an intramembrane region (pore-forming); the sequence is CAVYWSITTLATVGYGDLHA. The Extracellular segment spans residues 242-247; the sequence is ANTGEM. The helical transmembrane segment at 248 to 268 threads the bilayer; it reads LFSIAFMLFNMGLTSYIIGNI. Residues 269-593 lie on the Cytoplasmic side of the membrane; that stretch reads TNLVVHETTN…RDGDHLFFSW (325 aa). 350–470 contacts a nucleoside 3',5'-cyclic phosphate; that stretch reads LFQGVSDKLV…VVVFSNFVLY (121 aa). The region spanning 522–593 is the KHA domain; sequence RVSIHEHLLN…RDGDHLFFSW (72 aa).

The protein belongs to the potassium channel family. Plant (TC 1.A.1.4) subfamily.

It localises to the membrane. In terms of biological role, probable inward-rectifying potassium channel. Assuming opened or closed conformations in response to the voltage difference across the membrane, the channel is activated by hyperpolarization. The protein is Potassium channel KAT6 of Oryza sativa subsp. japonica (Rice).